We begin with the raw amino-acid sequence, 333 residues long: Ribosomal RNA small subunit methyltransferase H (333 aa).

Residues 43–45 (GGH), D62, Y89, D110, and Q117 contribute to the S-adenosyl-L-methionine site. The tract at residues 312–333 (RLRAARRIRTTPTRPSPRRRRP) is disordered.

The protein belongs to the methyltransferase superfamily. RsmH family.

The protein localises to the cytoplasm. It carries out the reaction cytidine(1402) in 16S rRNA + S-adenosyl-L-methionine = N(4)-methylcytidine(1402) in 16S rRNA + S-adenosyl-L-homocysteine + H(+). Functionally, specifically methylates the N4 position of cytidine in position 1402 (C1402) of 16S rRNA. The chain is Ribosomal RNA small subunit methyltransferase H from Beutenbergia cavernae (strain ATCC BAA-8 / DSM 12333 / CCUG 43141 / JCM 11478 / NBRC 16432 / NCIMB 13614 / HKI 0122).